The following is a 237-amino-acid chain: Ribonuclease PH (237 aa).

Residues R86 and 124 to 126 each bind phosphate; that span reads GTR.

Belongs to the RNase PH family. In terms of assembly, homohexameric ring arranged as a trimer of dimers.

It catalyses the reaction tRNA(n+1) + phosphate = tRNA(n) + a ribonucleoside 5'-diphosphate. Functionally, phosphorolytic 3'-5' exoribonuclease that plays an important role in tRNA 3'-end maturation. Removes nucleotide residues following the 3'-CCA terminus of tRNAs; can also add nucleotides to the ends of RNA molecules by using nucleoside diphosphates as substrates, but this may not be physiologically important. Probably plays a role in initiation of 16S rRNA degradation (leading to ribosome degradation) during starvation. The chain is Ribonuclease PH from Shewanella piezotolerans (strain WP3 / JCM 13877).